The sequence spans 118 residues: Urease subunit beta (118 aa).

Belongs to the urease beta subunit family. In terms of assembly, heterotrimer of UreA (gamma), UreB (beta) and UreC (alpha) subunits. Three heterotrimers associate to form the active enzyme.

The protein localises to the cytoplasm. It catalyses the reaction urea + 2 H2O + H(+) = hydrogencarbonate + 2 NH4(+). It participates in nitrogen metabolism; urea degradation; CO(2) and NH(3) from urea (urease route): step 1/1. The polypeptide is Urease subunit beta (Aliivibrio fischeri (strain ATCC 700601 / ES114) (Vibrio fischeri)).